Reading from the N-terminus, the 216-residue chain is Transmembrane emp24 domain-containing protein eca (216 aa).

An N-terminal signal peptide occupies residues Met-1–Gly-20. The Lumenal segment spans residues Leu-21–Ser-182. Residues Arg-30–Val-126 form the GOLD domain. A coiled-coil region spans residues Ala-134 to Asn-164. A helical transmembrane segment spans residues Arg-183–Met-203. The Cytoplasmic segment spans residues Arg-204–Val-216. The Prevents secretion from ER signature appears at Lys-213–Val-216.

This sequence belongs to the EMP24/GP25L family.

The protein resides in the endoplasmic reticulum membrane. Eca and bai are essential, though not redundant, for dorsoventral patterning of the embryo. Specifically required during early embryogenesis for the activity of maternal tkv, while the zygotic tkv is not affected. Involved in Golgi organization. The chain is Transmembrane emp24 domain-containing protein eca from Drosophila melanogaster (Fruit fly).